The sequence spans 493 residues: Cobyric acid synthase (493 aa).

A GATase cobBQ-type domain is found at Asp-252–Trp-441. Catalysis depends on Cys-333, which acts as the Nucleophile. His-433 is a catalytic residue.

It belongs to the CobB/CobQ family. CobQ subfamily.

The protein operates within cofactor biosynthesis; adenosylcobalamin biosynthesis. Functionally, catalyzes amidations at positions B, D, E, and G on adenosylcobyrinic A,C-diamide. NH(2) groups are provided by glutamine, and one molecule of ATP is hydrogenolyzed for each amidation. In Thermosynechococcus vestitus (strain NIES-2133 / IAM M-273 / BP-1), this protein is Cobyric acid synthase.